Here is a 691-residue protein sequence, read N- to C-terminus: Elongation factor G (691 aa).

Residues 10 to 284 form the tr-type G domain; that stretch reads KMYRNIGIMA…AIVKYLPSPL (275 aa). GTP-binding positions include 19–26, 83–87, and 137–140; these read AHIDAGKT, DTPGH, and NKMD.

The protein belongs to the TRAFAC class translation factor GTPase superfamily. Classic translation factor GTPase family. EF-G/EF-2 subfamily.

It localises to the cytoplasm. Catalyzes the GTP-dependent ribosomal translocation step during translation elongation. During this step, the ribosome changes from the pre-translocational (PRE) to the post-translocational (POST) state as the newly formed A-site-bound peptidyl-tRNA and P-site-bound deacylated tRNA move to the P and E sites, respectively. Catalyzes the coordinated movement of the two tRNA molecules, the mRNA and conformational changes in the ribosome. In Clostridium tetani (strain Massachusetts / E88), this protein is Elongation factor G.